The chain runs to 259 residues: Global transcriptional regulator CodY (259 aa).

Residues 1-155 are GAF domain; sequence MELLAKTRKL…SSTVVGMEIL (155 aa). Residues 203-222 constitute a DNA-binding region (H-T-H motif); sequence ASKIADRVGITRSVIVNALR. The residue at position 215 (Ser215) is a Phosphoserine.

This sequence belongs to the CodY family.

It is found in the cytoplasm. DNA-binding global transcriptional regulator which is involved in the adaptive response to starvation and acts by directly or indirectly controlling the expression of numerous genes in response to nutrient availability. During rapid exponential growth, CodY is highly active and represses genes whose products allow adaptation to nutrient depletion. This chain is Global transcriptional regulator CodY, found in Bacillus cereus (strain ATCC 10987 / NRS 248).